Reading from the N-terminus, the 346-residue chain is Phenylalanine--tRNA ligase alpha subunit (346 aa).

A Mg(2+)-binding site is contributed by glutamate 260.

Belongs to the class-II aminoacyl-tRNA synthetase family. Phe-tRNA synthetase alpha subunit type 1 subfamily. Tetramer of two alpha and two beta subunits. The cofactor is Mg(2+).

The protein localises to the cytoplasm. It catalyses the reaction tRNA(Phe) + L-phenylalanine + ATP = L-phenylalanyl-tRNA(Phe) + AMP + diphosphate + H(+). This is Phenylalanine--tRNA ligase alpha subunit from Herpetosiphon aurantiacus (strain ATCC 23779 / DSM 785 / 114-95).